A 164-amino-acid chain; its full sequence is uncharacterized protein (164 aa).

Residues 1 to 77 (MGQKKTMGTE…PCSIRDAPFH (77 aa)) form a disordered region.

This is an uncharacterized protein from Homo sapiens (Human).